The sequence spans 192 residues: Adenylate kinase (192 aa).

10-18 (GVPGVGGTT) serves as a coordination point for ATP.

The protein belongs to the archaeal adenylate kinase family. As to quaternary structure, monomer.

It is found in the cytoplasm. It carries out the reaction AMP + ATP = 2 ADP. In Methanococcus maripaludis (strain C5 / ATCC BAA-1333), this protein is Adenylate kinase.